We begin with the raw amino-acid sequence, 218 residues long: Alkylmercury lyase (218 aa).

The protein belongs to the MerB family.

The catalysed reaction is an alkylmercury + H(+) = an alkane + Hg(2+). Functionally, cleaves the carbon-mercury bond of organomercurials such as phenylmercuric acetate. One product is Hg(2+), which is subsequently detoxified by the mercuric reductase. The polypeptide is Alkylmercury lyase (Clostridium butyricum).